The chain runs to 370 residues: S-adenosylmethionine:tRNA ribosyltransferase-isomerase (370 aa).

Belongs to the QueA family. As to quaternary structure, monomer.

The protein localises to the cytoplasm. It carries out the reaction 7-aminomethyl-7-carbaguanosine(34) in tRNA + S-adenosyl-L-methionine = epoxyqueuosine(34) in tRNA + adenine + L-methionine + 2 H(+). It functions in the pathway tRNA modification; tRNA-queuosine biosynthesis. In terms of biological role, transfers and isomerizes the ribose moiety from AdoMet to the 7-aminomethyl group of 7-deazaguanine (preQ1-tRNA) to give epoxyqueuosine (oQ-tRNA). The chain is S-adenosylmethionine:tRNA ribosyltransferase-isomerase from Prochlorococcus marinus (strain SARG / CCMP1375 / SS120).